Here is a 319-residue protein sequence, read N- to C-terminus: Capsid protein (319 aa).

Its subcellular location is the virion. Functionally, the capsid protein self-assembles to form an icosahedral capsid with a T=2 symmetry made of 120 subunits. This is Capsid protein from Cryptosporidium parvum virus 1 (strain KSU-1).